Consider the following 562-residue polypeptide: Tissue-type plasminogen activator (562 aa).

The first 22 residues, 1–22, serve as a signal peptide directing secretion; sequence MDAMKRGLCCVLLLCGAVFVSP. Positions 23–32 are excised as a propeptide; it reads SQEIHARFRR. The propeptide at 33–35 is removed by plasmin; that stretch reads GAR. Residues 39 to 81 enclose the Fibronectin type-I domain; the sequence is VICRDEKTQMIYQQHQSWLRPVLRSNRVEYCWCNSGRAQCHSV. Disulfide bonds link Cys-41–Cys-71, Cys-69–Cys-78, Cys-86–Cys-97, Cys-91–Cys-108, Cys-110–Cys-119, Cys-127–Cys-208, Cys-148–Cys-190, Cys-179–Cys-203, Cys-215–Cys-296, Cys-236–Cys-278, Cys-267–Cys-291, Cys-299–Cys-430, Cys-342–Cys-358, Cys-350–Cys-419, Cys-444–Cys-519, Cys-476–Cys-492, and Cys-509–Cys-537. Positions 42–52 are important for binding to annexin A2; that stretch reads RDEKTQMIYQQ. The EGF-like domain occupies 82-120; sequence PVKSCSEPRCFNGGTCQQALYFSDFVCQCPEGFAGKCCE. An O-linked (Fuc) threonine glycan is attached at Thr-96. 2 Kringle domains span residues 127-208 and 215-296; these read CYED…TPAC and CYFG…VPSC. N-linked (GlcNAc...) asparagine glycosylation occurs at Asn-152. Asn-219 carries N-linked (GlcNAc...) asparagine; partial glycosylation. Residues 311–561 form the Peptidase S1 domain; sequence IKGGLFADIA…YLDWIRDNMR (251 aa). Catalysis depends on charge relay system residues His-357 and Asp-406. A glycan (N-linked (GlcNAc...) asparagine) is linked at Asn-483. The active-site Charge relay system is the Ser-513.

It belongs to the peptidase S1 family. As to quaternary structure, heterodimer of chain A and chain B held by a disulfide bond. Forms a heterodimer with SERPINA5. Binds to fibrin with high affinity. This interaction leads to an increase in the catalytic efficiency of the enzyme between 100-fold and 1000-fold, due to an increase in affinity for plasminogen. Similarly, binding to heparin increases the activation of plasminogen. Binds to annexin A2, cytokeratin-8, fibronectin and laminin. Binds to mannose receptor and the low-density lipoprotein receptor-related protein (LRP1); these proteins are involved in TPA clearance. Yet unidentified interactions on endothelial cells and vascular smooth muscle cells (VSMC) lead to a 100-fold stimulation of plasminogen activation. In addition, binding to VSMC reduces TPA inhibition by PAI-1 by 30-fold. Binds LRP1B; binding is followed by internalization and degradation. Interacts with SERPINE1. In complex with SERPINE1, interacts with SORL1. Interacts with apyrase from Anopheles gambiae saliva; the interaction results in PLAT activation probably via an allosteric activation mechanism. The single chain, almost fully active enzyme, can be further processed into a two-chain fully active form by a cleavage after Arg-310 catalyzed by plasmin, tissue kallikrein or factor Xa. Post-translationally, differential cell-specific N-linked glycosylation gives rise to two glycoforms, type I (glycosylated at Asn-219) and type II (not glycosylated at Asn-219). The single chain type I glycoform is less readily converted into the two-chain form by plasmin, and the two-chain type I glycoform has a lower activity than the two-chain type II glycoform in the presence of fibrin. In terms of processing, N-glycosylation of Asn-152; the bound oligomannosidic glycan is involved in the interaction with the mannose receptor. Characterization of O-linked glycan was studied in Bowes melanoma cell line. In terms of tissue distribution, synthesized in numerous tissues (including tumors) and secreted into most extracellular body fluids, such as plasma, uterine fluid, saliva, gingival crevicular fluid, tears, seminal fluid, and milk.

It is found in the secreted. It localises to the extracellular space. It catalyses the reaction Specific cleavage of Arg-|-Val bond in plasminogen to form plasmin.. Inhibited by SERPINA5. Inhibited by SERPINE1. Functionally, converts the abundant, but inactive, zymogen plasminogen to plasmin by hydrolyzing a single Arg-Val bond in plasminogen. By controlling plasmin-mediated proteolysis, it plays an important role in tissue remodeling and degradation, in cell migration and many other physiopathological events. During oocyte activation, plays a role in cortical granule reaction in the zona reaction, which contributes to the block to polyspermy. The chain is Tissue-type plasminogen activator from Homo sapiens (Human).